A 147-amino-acid polypeptide reads, in one-letter code: Protein BUD31 homolog (147 aa).

The short motif at 8 to 12 (RRVRK) is the Nuclear localization signal element.

This sequence belongs to the BUD31 (G10) family. As to quaternary structure, identified in the spliceosome C complex.

The protein localises to the nucleus. In terms of biological role, involved in pre-mRNA splicing process. The protein is Protein BUD31 homolog of Caenorhabditis elegans.